The sequence spans 240 residues: Orotidine 5'-phosphate decarboxylase (240 aa).

Substrate is bound by residues Asp-10, Lys-32, 59–68 (DLKLHDIPNT), Thr-122, Arg-183, Gln-192, Gly-212, and Arg-213. Lys-61 acts as the Proton donor in catalysis.

The protein belongs to the OMP decarboxylase family. Type 1 subfamily. Homodimer.

The enzyme catalyses orotidine 5'-phosphate + H(+) = UMP + CO2. The protein operates within pyrimidine metabolism; UMP biosynthesis via de novo pathway; UMP from orotate: step 2/2. In terms of biological role, catalyzes the decarboxylation of orotidine 5'-monophosphate (OMP) to uridine 5'-monophosphate (UMP). The chain is Orotidine 5'-phosphate decarboxylase from Carboxydothermus hydrogenoformans (strain ATCC BAA-161 / DSM 6008 / Z-2901).